The chain runs to 218 residues: GTP cyclohydrolase 1 (218 aa).

Residues Cys109, His112, and Cys180 each contribute to the Zn(2+) site.

It belongs to the GTP cyclohydrolase I family. In terms of assembly, toroid-shaped homodecamer, composed of two pentamers of five dimers.

The catalysed reaction is GTP + H2O = 7,8-dihydroneopterin 3'-triphosphate + formate + H(+). Its pathway is cofactor biosynthesis; 7,8-dihydroneopterin triphosphate biosynthesis; 7,8-dihydroneopterin triphosphate from GTP: step 1/1. The chain is GTP cyclohydrolase 1 (folE) from Pasteurella multocida (strain Pm70).